A 91-amino-acid chain; its full sequence is MHCLRAIVKGKVQGVYFRDFTRTQATRLGLCGYAKNLANGAEVEVVAEGDKDALLEFLDLLRSGPPRAEVKDVETSWETATANYSDFRIKH.

One can recognise an Acylphosphatase-like domain in the interval 3–91; it reads CLRAIVKGKV…ANYSDFRIKH (89 aa). Active-site residues include R18 and N36.

Belongs to the acylphosphatase family.

It carries out the reaction an acyl phosphate + H2O = a carboxylate + phosphate + H(+). This is Acylphosphatase (acyP) from Dehalococcoides mccartyi (strain CBDB1).